Consider the following 198-residue polypeptide: Holliday junction branch migration complex subunit RuvA (198 aa).

The segment at 1-64 (MIAHLRGTLL…EDAIALFGFL (64 aa)) is domain I. A domain II region spans residues 65-141 (DREEKRLFER…LDDLIAAAPA (77 aa)). The interval 141–145 (AAGPV) is flexible linker. The tract at residues 146–198 (AAGPAAEDVLSALLNLGYQRPAALKAIETAVEKDAAAGEDFDLLFRAALKLIR) is domain III.

The protein belongs to the RuvA family. In terms of assembly, homotetramer. Forms an RuvA(8)-RuvB(12)-Holliday junction (HJ) complex. HJ DNA is sandwiched between 2 RuvA tetramers; dsDNA enters through RuvA and exits via RuvB. An RuvB hexamer assembles on each DNA strand where it exits the tetramer. Each RuvB hexamer is contacted by two RuvA subunits (via domain III) on 2 adjacent RuvB subunits; this complex drives branch migration. In the full resolvosome a probable DNA-RuvA(4)-RuvB(12)-RuvC(2) complex forms which resolves the HJ.

It localises to the cytoplasm. The RuvA-RuvB-RuvC complex processes Holliday junction (HJ) DNA during genetic recombination and DNA repair, while the RuvA-RuvB complex plays an important role in the rescue of blocked DNA replication forks via replication fork reversal (RFR). RuvA specifically binds to HJ cruciform DNA, conferring on it an open structure. The RuvB hexamer acts as an ATP-dependent pump, pulling dsDNA into and through the RuvAB complex. HJ branch migration allows RuvC to scan DNA until it finds its consensus sequence, where it cleaves and resolves the cruciform DNA. The polypeptide is Holliday junction branch migration complex subunit RuvA (Acidobacterium capsulatum (strain ATCC 51196 / DSM 11244 / BCRC 80197 / JCM 7670 / NBRC 15755 / NCIMB 13165 / 161)).